A 276-amino-acid polypeptide reads, in one-letter code: Dermonecrotic toxin LsaSicTox-alphaIB2iii (276 aa).

Residue His-5 is part of the active site. Mg(2+) contacts are provided by Glu-25 and Asp-27. The active-site Nucleophile is His-41. 2 disulfide bridges follow: Cys-45-Cys-51 and Cys-47-Cys-190. Asp-85 contacts Mg(2+). 2 N-linked (GlcNAc...) asparagine glycosylation sites follow: Asn-129 and Asn-253.

This sequence belongs to the arthropod phospholipase D family. Class II subfamily. It depends on Mg(2+) as a cofactor. Expressed by the venom gland.

The protein resides in the secreted. It catalyses the reaction an N-(acyl)-sphingosylphosphocholine = an N-(acyl)-sphingosyl-1,3-cyclic phosphate + choline. It carries out the reaction an N-(acyl)-sphingosylphosphoethanolamine = an N-(acyl)-sphingosyl-1,3-cyclic phosphate + ethanolamine. The enzyme catalyses a 1-acyl-sn-glycero-3-phosphocholine = a 1-acyl-sn-glycero-2,3-cyclic phosphate + choline. The catalysed reaction is a 1-acyl-sn-glycero-3-phosphoethanolamine = a 1-acyl-sn-glycero-2,3-cyclic phosphate + ethanolamine. Functionally, dermonecrotic toxins cleave the phosphodiester linkage between the phosphate and headgroup of certain phospholipids (sphingolipid and lysolipid substrates), forming an alcohol (often choline) and a cyclic phosphate. This toxin acts on sphingomyelin (SM). It may also act on ceramide phosphoethanolamine (CPE), lysophosphatidylcholine (LPC) and lysophosphatidylethanolamine (LPE), but not on lysophosphatidylserine (LPS), and lysophosphatidylglycerol (LPG). It acts by transphosphatidylation, releasing exclusively cyclic phosphate products as second products. Induces dermonecrosis, hemolysis, increased vascular permeability, edema, inflammatory response, and platelet aggregation. The polypeptide is Dermonecrotic toxin LsaSicTox-alphaIB2iii (Loxosceles sabina (Tucson recluse spider)).